A 59-amino-acid polypeptide reads, in one-letter code: Large ribosomal subunit protein uL30 (59 aa).

The protein belongs to the universal ribosomal protein uL30 family. In terms of assembly, part of the 50S ribosomal subunit.

This is Large ribosomal subunit protein uL30 from Shewanella amazonensis (strain ATCC BAA-1098 / SB2B).